A 260-amino-acid chain; its full sequence is Flavin-dependent thymidylate synthase (260 aa).

The 202-residue stretch at 1–202 (MKIKLVSYSK…PRLFKYAGPN (202 aa)) folds into the ThyX domain. FAD is bound by residues Ser-55, 79 to 81 (RHR), and Gln-87. Residues 76–79 (QLVR), 87–91 (QMSHR), and Arg-141 each bind dUMP. The short motif at 79 to 89 (RHRIASYTQMS) is the ThyX motif element. FAD contacts are provided by residues 157–159 (NAR) and Asn-163. Position 168 (Arg-168) interacts with dUMP. Arg-168 functions as the Involved in ionization of N3 of dUMP, leading to its activation in the catalytic mechanism.

It belongs to the thymidylate synthase ThyX family. In terms of assembly, homotetramer. FAD is required as a cofactor.

It catalyses the reaction dUMP + (6R)-5,10-methylene-5,6,7,8-tetrahydrofolate + NADPH + H(+) = dTMP + (6S)-5,6,7,8-tetrahydrofolate + NADP(+). It functions in the pathway pyrimidine metabolism; dTTP biosynthesis. Its function is as follows. Catalyzes the reductive methylation of 2'-deoxyuridine-5'-monophosphate (dUMP) to 2'-deoxythymidine-5'-monophosphate (dTMP) while utilizing 5,10-methylenetetrahydrofolate (mTHF) as the methyl donor, and NADPH and FADH(2) as the reductant. The polypeptide is Flavin-dependent thymidylate synthase (Sulfolobus acidocaldarius (strain ATCC 33909 / DSM 639 / JCM 8929 / NBRC 15157 / NCIMB 11770)).